The chain runs to 239 residues: Putative transcriptional regulator of 2-aminoethylphosphonate degradation operons (239 aa).

One can recognise an HTH gntR-type domain in the interval 8–76 (IPQYLLIKAQ…DRRGWFVTPE (69 aa)). The H-T-H motif DNA-binding region spans 36 to 55 (ERELCAIFNTTRITIRESLA).

This is Putative transcriptional regulator of 2-aminoethylphosphonate degradation operons (phnR) from Salmonella paratyphi A (strain ATCC 9150 / SARB42).